We begin with the raw amino-acid sequence, 325 residues long: Pectinesterase A (325 aa).

Residues 1 to 18 (MRVQSYLSLFSLVGAALC) form the signal peptide. N-linked (GlcNAc...) asparagine glycosylation is present at N126. Position 143 (Q143) interacts with substrate. Catalysis depends on D166, which acts as the Proton donor. D187 functions as the Nucleophile in the catalytic mechanism. 2 residues coordinate substrate: R247 and W249.

Belongs to the pectinesterase family.

The protein resides in the secreted. It carries out the reaction [(1-&gt;4)-alpha-D-galacturonosyl methyl ester](n) + n H2O = [(1-&gt;4)-alpha-D-galacturonosyl](n) + n methanol + n H(+). Its pathway is glycan metabolism; pectin degradation; 2-dehydro-3-deoxy-D-gluconate from pectin: step 1/5. Functionally, involved in maceration and soft-rotting of plant tissue. Active against citrus pectin. In Emericella nidulans (strain FGSC A4 / ATCC 38163 / CBS 112.46 / NRRL 194 / M139) (Aspergillus nidulans), this protein is Pectinesterase A (pmeA).